The following is a 464-amino-acid chain: tRNA modification GTPase MnmE (464 aa).

Residues Arg25, Glu87, and Lys130 each contribute to the (6S)-5-formyl-5,6,7,8-tetrahydrofolate site. Residues 226 to 386 form the TrmE-type G domain; sequence GLSVVLAGQP…LRAELLRIAG (161 aa). Residue Asn236 coordinates K(+). GTP-binding positions include 236–241, 255–261, and 280–283; these read NVGKSS, TPIAGTT, and DTAG. A Mg(2+)-binding site is contributed by Ser240. K(+) is bound by residues Thr255, Ile257, and Thr260. Thr261 is a Mg(2+) binding site. Lys464 contributes to the (6S)-5-formyl-5,6,7,8-tetrahydrofolate binding site.

It belongs to the TRAFAC class TrmE-Era-EngA-EngB-Septin-like GTPase superfamily. TrmE GTPase family. Homodimer. Heterotetramer of two MnmE and two MnmG subunits. The cofactor is K(+).

The protein localises to the cytoplasm. Functionally, exhibits a very high intrinsic GTPase hydrolysis rate. Involved in the addition of a carboxymethylaminomethyl (cmnm) group at the wobble position (U34) of certain tRNAs, forming tRNA-cmnm(5)s(2)U34. The protein is tRNA modification GTPase MnmE of Burkholderia orbicola (strain AU 1054).